The following is a 314-amino-acid chain: Homoserine O-acetyltransferase (314 aa).

The Acyl-thioester intermediate role is filled by Cys-142. Substrate-binding residues include Lys-163 and Ser-192. His-235 (proton acceptor) is an active-site residue. Glu-237 is an active-site residue. Position 249 (Arg-249) interacts with substrate.

It belongs to the MetA family.

Its subcellular location is the cytoplasm. The catalysed reaction is L-homoserine + acetyl-CoA = O-acetyl-L-homoserine + CoA. Its pathway is amino-acid biosynthesis; L-methionine biosynthesis via de novo pathway; O-acetyl-L-homoserine from L-homoserine: step 1/1. Its function is as follows. Transfers an acetyl group from acetyl-CoA to L-homoserine, forming acetyl-L-homoserine. This chain is Homoserine O-acetyltransferase, found in Desulfovibrio desulfuricans (strain ATCC 27774 / DSM 6949 / MB).